The following is a 210-amino-acid chain: Protein GET1 (210 aa).

Residues 1–4 are Lumenal-facing; sequence MPSL. The chain crosses the membrane as a helical span at residues 5–24; the sequence is LIIVLIIHVVTYLINTIGAN. The Cytoplasmic segment spans residues 25 to 110; the sequence is TIDSLLWLLY…SFDLAVKSIR (86 aa). The stretch at 39–95 forms a coiled coil; that stretch reads NQTSQTANEQRRLKREVMQLKREMNATSSQDEFAKWAKLRRRHDKTMEEYEAKNKAL. Residues 111–131 form a helical membrane-spanning segment; that stretch reads FFSTTGLKLFLQFWCSKTPIF. Residues 132–155 lie on the Lumenal side of the membrane; sequence ELPRGWIPWQVEWVLSFPRAPLGT. Residues 156-172 traverse the membrane as a helical segment; it reads VSIQIWGGVCATVVSLA. Topologically, residues 173–210 are cytoplasmic; it reads GDAIGVVNVYLTSKAPKQKEPATSGENSARPMAIKKEL. Residues 189-210 are disordered; sequence KQKEPATSGENSARPMAIKKEL.

It belongs to the WRB/GET1 family. As to quaternary structure, interacts with GET3.

Its subcellular location is the endoplasmic reticulum membrane. In terms of biological role, required for the post-translational delivery of tail-anchored (TA) proteins to the endoplasmic reticulum. Acts as a membrane receptor for soluble GET3, which recognizes and selectively binds the transmembrane domain of TA proteins in the cytosol. This is Protein GET1 from Coccidioides immitis (strain RS) (Valley fever fungus).